We begin with the raw amino-acid sequence, 287 residues long: Agamous-like MADS-box protein AGL53 (287 aa).

An MADS-box domain is found at Ser-30–Asp-78. The interval Glu-151–Leu-171 is disordered.

As to quaternary structure, interacts with MEE14/CBP1.

It localises to the nucleus. Probable transcription factor that may function in the maintenance of the proper function of the central cell in pollen tube attraction. This Arabidopsis thaliana (Mouse-ear cress) protein is Agamous-like MADS-box protein AGL53.